A 657-amino-acid chain; its full sequence is MRLKIGFILRSLLVVGSFLGLVVLWSSLSSRPDDQSPLSRMREDRDVNNPLPNRGGNGLAPGDDRFKPVVPWPHVEGVEVDLESIRRKNKAKNEQERHAGGDSQRDVMQRQYLTFKPQTFTYRDPVLRPGVLGNFEPKEPEPHGVVGGPGEKAKPLVLGPEYKQAVQASIKEFGFNMVASDMISLDRSVNDLRQEECKYWHYDENLLTSSVVIVFHNEGWSTLMRTVHSVIKRTPRKYLAEIVLIDDFSNKEHLKEKLDEYIKLWNGLVKVFRNERREGLIQARSIGAQKAKLGQVLIYLDAHCEVAVNWYAPLVAPISKDRTICTVPIIDVISGNTYEIIPQGGGDEDGYARGAWDWSMLWKRVPLTSREKRLRKTKTEPYRSPAMAGGLFAIEKDFFFELGLYDPGLQIWGGENFEISYKIWQCGGKLLFVPCSRVGHIYRLEGWQGNPPPLYVGSSPTLKNYVRVVEVWWDEYKDYFYASRPESKALPYGDISELKKFREDHNCKSFKWFMEEIAYDITAHYPLPPRNVEWGEIRGLETAYCIDSMGKTNGGFVELGPCHRMGGNQLFRINEANQLMQYDQCLTKGPDGSKVMITHCNLNEFKEWQYFKSLHRFTHITSGKCLDRSEVLHQVFISTCDSSKMTQKWEMNNIHSV.

Over 1-6 the chain is Cytoplasmic; the sequence is MRLKIG. The chain crosses the membrane as a helical; Signal-anchor for type II membrane protein span at residues 7-29; the sequence is FILRSLLVVGSFLGLVVLWSSLS. 2 disordered regions span residues 30–66 and 83–105; these read SRPD…DDRF and ESIR…DSQR. Residues 30-657 lie on the Lumenal side of the membrane; the sequence is SRPDDQSPLS…KWEMNNIHSV (628 aa). 5 disulfide bridges follow: C197/C435, C426/C507, C545/C562, C585/C600, and C625/C640. A catalytic subdomain A region spans residues 206–317; the sequence is LLTSSVVIVF…VNWYAPLVAP (112 aa). The substrate site is built by D247 and R277. Mn(2+) contacts are provided by D301 and H303. Residues 381–443 are catalytic subdomain B; the sequence is PYRSPAMAGG…PCSRVGHIYR (63 aa). W412 contributes to the substrate binding site. Residue H440 coordinates Mn(2+). R443 lines the substrate pocket. In terms of domain architecture, Ricin B-type lectin spans 532 to 652; it reads VEWGEIRGLE…SKMTQKWEMN (121 aa).

It belongs to the glycosyltransferase 2 family. GalNAc-T subfamily. Requires Mn(2+) as cofactor. In terms of tissue distribution, highly expressed in sublingual gland. Expressed at lower level in stomach, small intestiine and colon.

Its subcellular location is the golgi apparatus membrane. The catalysed reaction is L-seryl-[protein] + UDP-N-acetyl-alpha-D-galactosamine = a 3-O-[N-acetyl-alpha-D-galactosaminyl]-L-seryl-[protein] + UDP + H(+). It carries out the reaction L-threonyl-[protein] + UDP-N-acetyl-alpha-D-galactosamine = a 3-O-[N-acetyl-alpha-D-galactosaminyl]-L-threonyl-[protein] + UDP + H(+). Its pathway is protein modification; protein glycosylation. Glycopeptide transferase involved in O-linked oligosaccharide biosynthesis, which catalyzes the transfer of an N-acetyl-D-galactosamine residue to an already glycosylated peptide. In contrast to other proteins of the family, it does not act as a peptide transferase that transfers GalNAc onto serine or threonine residue on the protein receptor, but instead requires the prior addition of a GalNAc on a peptide before adding additional GalNAc moieties. Some peptide transferase activity is however not excluded, considering that its appropriate peptide substrate may remain unidentified. The sequence is that of N-acetylgalactosaminyltransferase 7 (Galnt7) from Mus musculus (Mouse).